The chain runs to 1556 residues: Bromodomain adjacent to zinc finger domain protein 1A (1556 aa).

Positions 1-128 (MPLLHRKPFV…EETVEVIRNN (128 aa)) are required for interaction with the CHRAC1-POLE3 heterodimer. Required for interaction with the CHRAC1-POLE3 heterodimer. The tract at residues 1 to 133 (MPLLHRKPFV…VIRNNGARLQ (133 aa)) is required for interaction with NCOR1. One can recognise a WAC domain in the interval 22 to 128 (EEVFYCKVTN…EETVEVIRNN (107 aa)). A Phosphoserine modification is found at Ser270. Residues 306–397 (KERDKLLKQE…YVEYLKQWSK (92 aa)) adopt a coiled-coil conformation. One can recognise a DDT domain in the interval 422–487 (PEIFGDALMV…LTAIFQAIAE (66 aa)). Positions 634 to 709 (IEDYVDILRQ…DISIGEEERE (76 aa)) form a coiled coil. Positions 662 to 695 (EAAARIRKRKEEKLKEQEQKMKEKQEKLKEDEQR) are enriched in basic and acidic residues. Disordered stretches follow at residues 662–754 (EAAA…NGFK), 841–877 (PSSFQNNVQSQDPQVSTKTGEPLMSESTSNIDQGPRD), and 941–966 (FHFSDKPQPDSKPTYSRGRSSNAYDP). Residues 667 to 933 (IRKRKEEKLK…QEKSRICAQL (267 aa)) form a required for interaction with SMARCA5 and formation of the CHRAC ISWI chromatin remodeling complex region. Phosphoserine is present on Ser702. A compositionally biased stretch (acidic residues) spans 703 to 713 (IGEEEREDFDT). Residues 715–726 (IESKDTEQKELD) show a composition bias toward basic and acidic residues. Over residues 727–736 (QDMVTEDEDD) the composition is skewed to acidic residues. Thr731 carries the post-translational modification Phosphothreonine. Polar residues-rich tracts occupy residues 842 to 872 (SSFQNNVQSQDPQVSTKTGEPLMSESTSNID) and 951 to 965 (SKPTYSRGRSSNAYD). Lys952 participates in a covalent cross-link: Glycyl lysine isopeptide (Lys-Gly) (interchain with G-Cter in SUMO2). Ser960 and Ser961 each carry phosphoserine. The PHD-type zinc-finger motif lies at 1148–1198 (NARCKICRKKGDAENMVLCDGCDRGHHTYCVRPKLKTVPEGDWFCPECRPK). 2 disordered regions span residues 1202 to 1376 (RRLS…NFPN) and 1399 to 1431 (LQESESKRRCRKRQSPEPSPVTLGRRSSGRQGG). Positions 1213–1258 (ESDEDVEDSMGGEDDEVDGDEEEGQSEEEEYEVEQDEDDSQEEEEV) are enriched in acidic residues. Basic residues predominate over residues 1262 to 1276 (KRGRPQVRLPVKTRG). The span at 1277–1312 (KLSSSFSSRGQQQEPGRYPSRSQQSTPKTTVSSKTG) shows a compositional bias: polar residues. 9 positions are modified to phosphoserine: Ser1281, Ser1320, Ser1339, Ser1353, Ser1363, Ser1371, Ser1402, Ser1413, and Ser1417. Residues 1363 to 1374 (SANNTPENSPNF) are compositionally biased toward polar residues. The Bromo domain maps to 1430–1533 (GGVHELSAFE…AFFHIQAQKL (104 aa)). Thr1547 bears the Phosphothreonine mark.

Belongs to the WAL family. Component of the ACF-1 ISWI chromatin remodeling complex at least composed of SMARCA1 and BAZ1A, which regulates the spacing of histone octamers on the DNA template to facilitate access to DNA. Within the ACF-1 ISWI chromatin remodeling complex interacts with SMARCA1; the interaction is direct. Component of the ACF-5 ISWI chromatin remodeling complex (also called the ACF complex) at least composed of BAZ1A and SMARCA5/SNF2H, which regulates the spacing of histone octamers on the DNA template to facilitate access to DNA. Within the ACF-5 ISWI chromatin remodeling complex interacts with SMARCA5/SNF2H; the interaction is direct. Component of the CHRAC ISWI chromatin remodeling complex at least composed of SMARCA5/SNF2H, BAZ1A/ACF1, CHRAC1 and POLE3; the complex preferentially binds DNA through the CHRAC1-POLE3 heterodimer and possesses ATP-dependent nucleosome-remodeling activity. Within the complex interacts (via N-terminus) with POLE3-CHRAC1 heterodimer; the interaction is direct and is required for the complex to preferentially bind to DNA. Within the complex interacts with SMARCA5/SNF2H; the interaction is direct and promotes the interaction with the POLE3-CHRAC1 heterodimer. Interacts with NCOR1 (via its RD1 domain); the interaction corepresses a number of NCOR1-regulated genes. Highly expressed in testis and at low or undetectable levels in other tissues analyzed.

The protein localises to the nucleus. In terms of biological role, regulatory subunit of the ATP-dependent ACF-1 and ACF-5 ISWI chromatin remodeling complexes, which form ordered nucleosome arrays on chromatin and slide edge- and center-positioned histone octamers away from their original location on the DNA template to facilitate access to DNA during DNA-templated processes such as DNA replication, transcription, and repair. Both complexes regulate the spacing of nucleosomes along the chromatin and have the ability to slide mononucleosomes to the center of a DNA template in an ATP-dependent manner. The ACF-1 ISWI chromatin remodeling complex has a lower ATP hydrolysis rate than the ACF-5 ISWI chromatin remodeling complex. Has a role in sensing the length of DNA which flank nucleosomes, which modulates the nucleosome spacing activity of the ACF-5 ISWI chromatin remodeling complex. Involved in DNA replication and together with SMARCA5/SNF2H is required for replication of pericentric heterochromatin in S-phase. May have a role in nuclear receptor-mediated transcription repression. The sequence is that of Bromodomain adjacent to zinc finger domain protein 1A (BAZ1A) from Homo sapiens (Human).